Here is a 117-residue protein sequence, read N- to C-terminus: MVQRLTYRRRLSYNTASNKTRLSRTPGNRIVYLYTKKVGKAPKSACGVCPGRLRGVRAVRPKVLMRLSKTQKHVSRAYGGSMCAKCVRDRIKRAFLIEEQKIVVKVLKAQAQSQKAK.

At S12 the chain carries Phosphoserine. N6-acetyllysine occurs at positions 36 and 43. K108 is covalently cross-linked (Glycyl lysine isopeptide (Lys-Gly) (interchain with G-Cter in SUMO2)).

The protein belongs to the eukaryotic ribosomal protein eL34 family. As to quaternary structure, component of the large ribosomal subunit.

The protein localises to the cytoplasm. Its subcellular location is the cytosol. It localises to the endoplasmic reticulum. Component of the large ribosomal subunit. The ribosome is a large ribonucleoprotein complex responsible for the synthesis of proteins in the cell. The polypeptide is Large ribosomal subunit protein eL34 (Rpl34) (Mus musculus (Mouse)).